A 494-amino-acid chain; its full sequence is Sulfate adenylyltransferase subunit 1 (494 aa).

Residues 28–242 (TRPLRLITCG…TLELATVRST (215 aa)) enclose the tr-type G domain. The G1 stretch occupies residues 37 to 44 (GSVDDGKS). GTP is bound at residue 37 to 44 (GSVDDGKS). Residues 94 to 98 (GITID) are G2. The segment at 115–118 (DTPG) is G3. GTP-binding positions include 115–119 (DTPGH) and 170–173 (NKID). A G4 region spans residues 170–173 (NKID). The G5 stretch occupies residues 207 to 209 (SAL).

The protein belongs to the TRAFAC class translation factor GTPase superfamily. Classic translation factor GTPase family. CysN/NodQ subfamily. As to quaternary structure, heterodimer composed of CysD, the smaller subunit, and CysN.

The enzyme catalyses sulfate + ATP + H(+) = adenosine 5'-phosphosulfate + diphosphate. It functions in the pathway sulfur metabolism; hydrogen sulfide biosynthesis; sulfite from sulfate: step 1/3. With CysD forms the ATP sulfurylase (ATPS) that catalyzes the adenylation of sulfate producing adenosine 5'-phosphosulfate (APS) and diphosphate, the first enzymatic step in sulfur assimilation pathway. APS synthesis involves the formation of a high-energy phosphoric-sulfuric acid anhydride bond driven by GTP hydrolysis by CysN coupled to ATP hydrolysis by CysD. In Agrobacterium fabrum (strain C58 / ATCC 33970) (Agrobacterium tumefaciens (strain C58)), this protein is Sulfate adenylyltransferase subunit 1.